Consider the following 176-residue polypeptide: MAANLRNNAFLSSLMFLLLIGSSYAITSSEMSTICDKTLNPSFCLKFLNTKFASPNLQALAKTTLDSTQARATQTLKKLQSIIDGGVDPRSKLAYRSCVDEYESAIGNLEEAFEHLASGDGMGMNMKVSAALDGADTCLDDVKRLRSVDSSVVNNSKTIKNLCGIALVISNMLPRN.

The signal sequence occupies residues 1–25; that stretch reads MAANLRNNAFLSSLMFLLLIGSSYA. 2 cysteine pairs are disulfide-bonded: Cys-35/Cys-44 and Cys-98/Cys-138. N-linked (GlcNAc...) asparagine glycosylation is present at Asn-154.

Belongs to the PMEI family. As to quaternary structure, monomer and homodimer. Interacts in vitro with PPME1. Highest expression in flowers. Expressed exclusively at the pollen tube tip.

It localises to the secreted. The protein localises to the extracellular space. The protein resides in the apoplast. Inhibits pectin methylesterase (PME) from flowers and siliques. Inhibits PME from leaves. The protein is Pectinesterase inhibitor 1 of Arabidopsis thaliana (Mouse-ear cress).